The following is a 140-amino-acid chain: Nucleoside diphosphate kinase (140 aa).

The ATP site is built by Lys-11, Phe-59, Arg-87, Thr-93, Arg-104, and Asn-114. The active-site Pros-phosphohistidine intermediate is the His-117.

It belongs to the NDK family. As to quaternary structure, homotetramer. Mg(2+) is required as a cofactor.

The protein resides in the cytoplasm. The enzyme catalyses a 2'-deoxyribonucleoside 5'-diphosphate + ATP = a 2'-deoxyribonucleoside 5'-triphosphate + ADP. The catalysed reaction is a ribonucleoside 5'-diphosphate + ATP = a ribonucleoside 5'-triphosphate + ADP. In terms of biological role, major role in the synthesis of nucleoside triphosphates other than ATP. The ATP gamma phosphate is transferred to the NDP beta phosphate via a ping-pong mechanism, using a phosphorylated active-site intermediate. This is Nucleoside diphosphate kinase from Francisella tularensis subsp. tularensis (strain SCHU S4 / Schu 4).